Here is a 152-residue protein sequence, read N- to C-terminus: Transcription elongation factor Spt5 (152 aa).

A KOW domain is found at 99–128 (PGDVVEVISGPFRGTQAQVIRVEEAKGEVV).

Belongs to the archaeal Spt5 family. As to quaternary structure, heterodimer composed of Spt4 and Spt5. Interacts with RNA polymerase (RNAP).

Stimulates transcription elongation. In Saccharolobus solfataricus (strain ATCC 35092 / DSM 1617 / JCM 11322 / P2) (Sulfolobus solfataricus), this protein is Transcription elongation factor Spt5.